Reading from the N-terminus, the 375-residue chain is Trichodiene synthase (375 aa).

It belongs to the trichodiene synthase family.

The enzyme catalyses (2E,6E)-farnesyl diphosphate = trichodiene + diphosphate. It functions in the pathway sesquiterpene biosynthesis; trichothecene biosynthesis. In terms of biological role, TS is a member of the terpene cyclase group of enzymes. It catalyzes the isomerization and cyclization of farnesyl pyro-phosphate to form trichodiene, the first cyclic intermediate in the biosynthetic pathway for trichothecenes. It serves to branch trichothecene biosynthesis from the isoprenoid pathway. The polypeptide is Trichodiene synthase (TRI5) (Fusarium culmorum).